A 107-amino-acid polypeptide reads, in one-letter code: Proteinase inhibitor 1 (107 aa).

Residues 1 to 23 form the signal peptide; it reads MELKFAHIIVFFLLATSFETLMA. Residues 24 to 36 constitute a propeptide that is removed on maturation; it reads RKESDGPEVIQLL.

Belongs to the protease inhibitor I13 (potato type I serine protease inhibitor) family.

This Solanum tuberosum (Potato) protein is Proteinase inhibitor 1.